The chain runs to 192 residues: Nucleoside triphosphate pyrophosphatase (192 aa).

Asp-73 acts as the Proton acceptor in catalysis.

Belongs to the Maf family. A divalent metal cation serves as cofactor.

The protein localises to the cytoplasm. The enzyme catalyses a ribonucleoside 5'-triphosphate + H2O = a ribonucleoside 5'-phosphate + diphosphate + H(+). It catalyses the reaction a 2'-deoxyribonucleoside 5'-triphosphate + H2O = a 2'-deoxyribonucleoside 5'-phosphate + diphosphate + H(+). Its function is as follows. Nucleoside triphosphate pyrophosphatase. May have a dual role in cell division arrest and in preventing the incorporation of modified nucleotides into cellular nucleic acids. The protein is Nucleoside triphosphate pyrophosphatase of Ehrlichia canis (strain Jake).